Reading from the N-terminus, the 181-residue chain is MKQLLDFIPLIIFFALYKFYDIYVATGALIAATTVQVIVTYAMYKKVEKMQLITFVMVALFGGMTLALHDDNFIKWKVTIVYVVFALGLTISQIMGKPAIKGMLGKELTLPDAVWSTINWAWVMFFSGCAALNLYVAYHLPLDVWVNFKVFGLLAATLVFTLLTGGYIYKHLPHEPKQKNQ.

5 helical membrane-spanning segments follow: residues 10 to 30, 50 to 70, 80 to 100, 120 to 140, and 148 to 168; these read LIIFFALYKFYDIYVATGALI, MQLITFVMVALFGGMTLALHD, IVYVVFALGLTISQIMGKPAI, WAWVMFFSGCAALNLYVAYHL, and FKVFGLLAATLVFTLLTGGYI.

It belongs to the YciB family.

It localises to the cell inner membrane. Functionally, plays a role in cell envelope biogenesis, maintenance of cell envelope integrity and membrane homeostasis. The chain is Inner membrane-spanning protein YciB from Vibrio cholerae serotype O1 (strain ATCC 39315 / El Tor Inaba N16961).